Consider the following 102-residue polypeptide: uncharacterized protein (102 aa).

The chain crosses the membrane as a helical span at residues 27–47 (TISLVSAGLLEEIFLLFGLTF).

Its subcellular location is the membrane. This is an uncharacterized protein from Saccharomyces cerevisiae (strain ATCC 204508 / S288c) (Baker's yeast).